Here is a 264-residue protein sequence, read N- to C-terminus: 3-methyl-2-oxobutanoate hydroxymethyltransferase (264 aa).

Residues aspartate 45 and aspartate 84 each contribute to the Mg(2+) site. 3-methyl-2-oxobutanoate contacts are provided by residues 45 to 46 (DS), aspartate 84, and lysine 112. Glutamate 114 is a binding site for Mg(2+). Glutamate 181 acts as the Proton acceptor in catalysis.

Belongs to the PanB family. Homodecamer; pentamer of dimers. Requires Mg(2+) as cofactor.

It localises to the cytoplasm. It carries out the reaction 3-methyl-2-oxobutanoate + (6R)-5,10-methylene-5,6,7,8-tetrahydrofolate + H2O = 2-dehydropantoate + (6S)-5,6,7,8-tetrahydrofolate. Its pathway is cofactor biosynthesis; (R)-pantothenate biosynthesis; (R)-pantoate from 3-methyl-2-oxobutanoate: step 1/2. Its function is as follows. Catalyzes the reversible reaction in which hydroxymethyl group from 5,10-methylenetetrahydrofolate is transferred onto alpha-ketoisovalerate to form ketopantoate. The protein is 3-methyl-2-oxobutanoate hydroxymethyltransferase of Photobacterium profundum (strain SS9).